The primary structure comprises 593 residues: Aspartate--tRNA(Asp/Asn) ligase (593 aa).

Residue E173 participates in L-aspartate binding. The segment at 197-200 (QLFK) is aspartate. An L-aspartate-binding site is contributed by R219. Residues 219–221 (RDE) and Q228 each bind ATP. H451 serves as a coordination point for L-aspartate. Residue E485 participates in ATP binding. An L-aspartate-binding site is contributed by R492. 537–540 (GIDR) serves as a coordination point for ATP.

The protein belongs to the class-II aminoacyl-tRNA synthetase family. Type 1 subfamily. In terms of assembly, homodimer.

It localises to the cytoplasm. The enzyme catalyses tRNA(Asx) + L-aspartate + ATP = L-aspartyl-tRNA(Asx) + AMP + diphosphate. Functionally, aspartyl-tRNA synthetase with relaxed tRNA specificity since it is able to aspartylate not only its cognate tRNA(Asp) but also tRNA(Asn). Reaction proceeds in two steps: L-aspartate is first activated by ATP to form Asp-AMP and then transferred to the acceptor end of tRNA(Asp/Asn). This chain is Aspartate--tRNA(Asp/Asn) ligase, found in Legionella pneumophila subsp. pneumophila (strain Philadelphia 1 / ATCC 33152 / DSM 7513).